The sequence spans 86 residues: Large ribosomal subunit protein bL31 (86 aa).

The disordered stretch occupies residues 66 to 86; sequence GMGSANSATSKEQKADKDSQK. Residues 76 to 86 show a composition bias toward basic and acidic residues; the sequence is KEQKADKDSQK.

It belongs to the bacterial ribosomal protein bL31 family. Type A subfamily. As to quaternary structure, part of the 50S ribosomal subunit.

Functionally, binds the 23S rRNA. The polypeptide is Large ribosomal subunit protein bL31 (Prochlorococcus marinus (strain MIT 9215)).